Here is a 249-residue protein sequence, read N- to C-terminus: DNA polymerase sliding clamp 3 (249 aa).

It belongs to the PCNA family. Homotrimer. The subunits circularize to form a toroid; DNA passes through its center. Replication factor C (RFC) is required to load the toroid on the DNA.

Sliding clamp subunit that acts as a moving platform for DNA processing. Responsible for tethering the catalytic subunit of DNA polymerase and other proteins to DNA during high-speed replication. The chain is DNA polymerase sliding clamp 3 from Aeropyrum pernix (strain ATCC 700893 / DSM 11879 / JCM 9820 / NBRC 100138 / K1).